Here is a 1919-residue protein sequence, read N- to C-terminus: Protein TIC 214 (1919 aa).

A run of 6 helical transmembrane segments spans residues 18-38, 67-87, 90-110, 127-147, 175-195, and 224-244; these read IINS…FSIG, FITG…HLAL, PHTI…WNNH, LSIQ…HFIL, VGWL…LVWI, and IFSI…PSPI. Disordered regions lie at residues 250–375, 1107–1129, and 1606–1636; these read KETP…GKEK, IKSI…NKRS, and ELKN…RRFV. 5 stretches are compositionally biased toward acidic residues: residues 259-269, 278-288, 297-307, 316-328, and 355-366; these read GESEEETDVEI, GESE…EIET, and EKEDPDKIDETE. A compositionally biased stretch (basic residues) spans 1107–1117; the sequence is IKSITKEKKKG. Over residues 1606–1623 the composition is skewed to basic and acidic residues; sequence ELKNRNQEEKEPADRGDL. Residues 1626-1636 are compositionally biased toward polar residues; it reads DAQNQGNRRFV.

It belongs to the TIC214 family. In terms of assembly, part of the Tic complex.

The protein localises to the plastid. It localises to the chloroplast inner membrane. Involved in protein precursor import into chloroplasts. May be part of an intermediate translocation complex acting as a protein-conducting channel at the inner envelope. The polypeptide is Protein TIC 214 (Panax ginseng (Korean ginseng)).